Here is a 486-residue protein sequence, read N- to C-terminus: Elastin-binding protein EbpS (486 aa).

Residues 1-40 (MSNNFKDDFEKNRQSIDTNSHQDHTEDVEKDQSELEHQDT) show a composition bias toward basic and acidic residues. Positions 1-314 (MSNNFKDDFE…NHDRDKERKK (314 aa)) are disordered. Topologically, residues 2–204 (SNNFKDDFEK…EPKEHHNGKK (203 aa)) are extracellular. An elastin-binding region spans residues 14 to 34 (QSIDTNSHQDHTEDVEKDQSE). The segment covering 64–85 (TNHNKQVHNESQTSEDNVQNEA) has biased composition (polar residues). Composition is skewed to basic and acidic residues over residues 103-118 (EPSH…EEYY) and 126-143 (DKSH…DTIK). Over residues 161–179 (EQSQQPKPYFTTGANQSET) the composition is skewed to polar residues. The span at 180–199 (SKNEHDNDSVKQDQDEPKEH) shows a compositional bias: basic and acidic residues. Residues 204–225 (KAAAIGAGTAGVAGAAGAMAAS) are compositionally biased toward low complexity. The helical transmembrane segment at 205–225 (AAAIGAGTAGVAGAAGAMAAS) threads the bilayer. Residues 226–319 (KAKKHSNDAQ…KERKKGGMAK (94 aa)) are Cytoplasmic-facing. Polar residues predominate over residues 233-246 (DAQNKSNSGKANNS). Residues 247 to 259 (TEDKASQDKSKDH) show a composition bias toward basic and acidic residues. Positions 278-297 (GAASKSASAASKPHASNNAS) are enriched in low complexity. Basic and acidic residues predominate over residues 299-314 (NHDEHDNHDRDKERKK). The helical transmembrane segment at 320–340 (VLLPLIAAVLIIGALAIFGGM) threads the bilayer. At 341–486 (ALNNHNNGTK…IRNGQQIVIP (146 aa)) the chain is on the extracellular side. The segment at 351-440 (ENKIANTNKN…QRQGGGQRHT (90 aa)) is disordered. The segment covering 361-398 (NADESKDKDTSKDASKDKSKSTDSDKSKEDQDKATKDE) has biased composition (basic and acidic residues). Residues 403–431 (QNNANQANNQAQNNQNQQQANQNQQQQQQ) are compositionally biased toward low complexity. In terms of domain architecture, LysM spans 437–485 (QRHTVNGQENLYRIAIQYYGSGSPENVEKIRRANGLSGNNIRNGQQIVI).

The protein resides in the cell membrane. Functionally, promotes binding of soluble elastin peptides and tropoelastin to S.aureus cells although it is not able to promote bacterial adherence to immobilized elastin and, therefore, is not a microbial surface component recognizing adhesive matrix molecule (MSCRAMM). This chain is Elastin-binding protein EbpS (ebpS), found in Staphylococcus aureus (strain USA300).